Reading from the N-terminus, the 404-residue chain is Lipase lipl-3 (404 aa).

The first 20 residues, 1-20, serve as a signal peptide directing secretion; sequence MCSSLCALLLVILAVHNVHA. N-linked (GlcNAc...) asparagine glycosylation occurs at asparagine 65. Serine 168 serves as the catalytic Nucleophile. Residue asparagine 272 is glycosylated (N-linked (GlcNAc...) asparagine). Catalysis depends on charge relay system residues aspartate 344 and histidine 376.

The protein belongs to the AB hydrolase superfamily. Lipase family.

It is found in the secreted. The protein resides in the lysosome lumen. Its function is as follows. Lipase that, together with lipl-1, plays a role in the response to nutrient deprivation by controlling lipid metabolism. Specifically, involved in the breakdown of lipids during lipophagy, a process during which lipids contained in lipid droplets that have been delivered to lysosomes by autophagy are degraded. The polypeptide is Lipase lipl-3 (Caenorhabditis elegans).